The sequence spans 1192 residues: MAKYMISGSKGGSKKPYVPKEMEDNLISINKIKVLLAVSDGECDPDFTLRDLYLDDVPVIASDGTVNYEGVTAEYRPGTQTQDYIQGFTDTSSEVTVARDITGDNPYVISVTNKNLSAVRIKILMPVGIKTEDNGDLVGVRVEYAVDMAIDGGSYSEVMRDVIDGKTRSGYDRSRRIDLPKFDERVLIRVKRLTPDSTSSKVTDKIKLQSYAEVVDAKFRYPLTGLVFVEFDSELFPTQIPNISIKKKWKIINVPSNYDPISREYHGSWDGTFKKAWSNNPAWVLYDLVTNQRYGLDQRELGIQIDKWSLYEAGVYCDQKVPDGKGGTEPRYLCDVVIQNQVEAYQLIRDICSIFRGMSFWNGESLSIVIDKPRDPSYVFTNENVINGDFQYTTASEKSMYTQCNVTFDDEQNMYQQDVEGVFDTEAALRFGYNPTSITAIGCTRRSEANRRGRWVLKTNLRSTTVNFATGLEGMIPSIGDVIAIADNFQSSNLTLNLSGRVMEVSGLQVFVPFKVDARPGDFIIINKPDGKPVKRTISKVSADGKTIELNIGFGFDVKPDTVFAIDRTDLALQQYVVTTISKGDDENEFTYSITAVEYDPNKYDEIDYGVNIDDRPTSIVQPDVMAAPENVKISSYSRVVQGVSVETMVVSWDKVPYASLYEMQWRKGDGNWLNTPQTANKEIEVEGIYSGNYQVRVRSVSASGNASPWSKIATATLTGKVGEPGAPINLTASDNEVFGIRVKWGMPEGSGDTAYIELHQSPDGTVENSSLLTLIPYPQYEYWHSTLPAGQVVWYRIRSVDRIGNVSSWTDFVRGMASDDVESVLGDILDKIFDTEAGQEIKENAIDSANKIKDQAQSIIQNALANDADVKWTRVQNGKRKAEYGHALELIANETEARVTQIEELRASIDGEITSSIKTVQEAIATESETRATQIQQLDSKFTKEIDGVRKDTSASISDVRQTITNESEARAQAVQQLDAKFTKEINDLDGVIKTEVEANISEVKQAIANETEARVQADQALTARFGDVESALVEKLDSWASVDSVGAKYAMKLGLTYKGQQYSAGMVMQLSQGSSGLISQILFDANRFAIMTSSTGGTFTLPFVVENNQVFINSLLVKNGSITNAMIGNVIQSNNFVQNQQGWRLDKNGIFENYGSTPGEGATKFTNEGLKVKDANGVLRVEVGRITGSW.

Fibronectin type-III domains follow at residues 628-722 (APEN…TGKV) and 727-821 (APIN…ASDD).

Belongs to the Caudoviricetes tip attachment protein J family. Homotrimer. Ubiquitinated by the Bil antiviral defense system; about 20% of CTF is ubiqutinated when the Bil system is expressed in E.coli MG1655 and infected with this virus, or when this protein is expressed in a strain with the Bil system.

The protein localises to the virion. The protein resides in the host cytoplasm. Functionally, attaches the virion to the host receptor, inducing viral DNA ejection. During tail assembly, initiates distal tail tip assembly. During virus entry in host cell, strongly binds to host receptor in an irreversible attachment. The binding induces structural changes in the tail leading to viral DNA injection. This Escherichia phage SECphi27 protein is Tip attachment protein J.